The following is a 258-amino-acid chain: L-fucose dehydrogenase (258 aa).

Residues S17, I19, R39, H40, E63, L64, and N90 each contribute to the NADP(+) site. The beta-L-fucose site is built by N94, S140, K141, Q147, and Y153. Positions 153 and 157 each coordinate NADP(+). Catalysis depends on Y153, which acts as the Proton acceptor. The beta-L-fucose site is built by A184 and E185. 2 residues coordinate NADP(+): V186 and T188.

This sequence belongs to the short-chain dehydrogenases/reductases (SDR) family. Homotetramer; dimer of dimers.

It catalyses the reaction beta-L-fucose + NADP(+) = L-fucono-1,5-lactone + NADPH + H(+). The catalysed reaction is D-arabinose + NADP(+) = D-arabinono-1,5-lactone + NADPH + H(+). It participates in carbohydrate degradation; L-fucose degradation. Functionally, L-fucose dehydrogenase involved in an L-fucose degradation pathway. Catalyzes the oxidation of L-fucose to L-fucono-1,5-lactone. Can also act on D-arabinose, with lower catalytic efficiency, and has weak activity with L-galactose and 4-deoxy-L-fucose. Shows a preference for NADP(+) over NAD(+). This Burkholderia multivorans (strain ATCC 17616 / 249) protein is L-fucose dehydrogenase.